The following is a 1769-amino-acid chain: Tight junction protein 1 (1769 aa).

The PDZ 1 domain occupies 23–110 (TVTLHRAPGF…NAKITIRRKK (88 aa)). Positions 102 to 112 (AKITIRRKKKV) are enriched in basic residues. The interval 102–188 (AKITIRRKKK…QPPKPTKVTL (87 aa)) is disordered. The span at 123 to 135 (PVSENEDSYDEEV) shows a compositional bias: acidic residues. Residue S125 is modified to Phosphoserine. Residue Y131 is modified to Phosphotyrosine. Basic and acidic residues predominate over residues 148–174 (RRSEKSWARDRSASRERSLSPRSDRRS). Phosphoserine occurs at positions 174, 177, and 178. Phosphothreonine is present on T184. The PDZ 2 domain occupies 185-263 (KVTLVKSRKN…KLKMVVQRDE (79 aa)). Phosphoserine is present on residues S211 and S240. At T266 the chain carries Phosphothreonine. Phosphoserine occurs at positions 274, 276, 279, 283, 289, 293, 296, 299, 322, 328, 333, 336, and 352. The segment at 295–362 (ASDHSGRSHD…TPVKHADDHT (68 aa)) is disordered. The segment covering 298–326 (HSGRSHDRPPRHSRSRSPDQRSEPSDHSR) has biased composition (basic and acidic residues). A Phosphothreonine modification is found at T353. A PDZ 3 domain is found at 420-501 (SMKLVKFRKG…GEEVTILAQK (82 aa)). The SH3 domain occupies 515-583 (GDSFYIRTHF…PNKNRAEQLA (69 aa)). The region spanning 609-790 (SKRNLRKSRE…WYGALKEAIQ (182 aa)) is the Guanylate kinase-like domain. Phosphoserine occurs at positions 616 and 621. The tract at residues 632 to 875 (YERVVLREAG…GTPPESAITR (244 aa)) is occludin (OCLN)-binding region. A Phosphothreonine modification is found at T808. Phosphoserine occurs at positions 809 and 820. Y821 carries the post-translational modification Phosphotyrosine. Phosphoserine is present on residues S823, S827, and S836. 2 disordered regions span residues 824-976 (APGS…LRTP) and 1010-1067 (EMMR…SYTD). Phosphothreonine occurs at positions 845, 847, 853, 860, and 867. Residues 878-891 (EPVREDSSGMHHEN) are compositionally biased toward basic and acidic residues. The segment covering 892-905 (QTYPPYSPQAQPQP) has biased composition (low complexity). Phosphoserine is present on S911. 2 stretches are compositionally biased toward polar residues: residues 933–952 (PETNPASSTSAVNHNVTLTN) and 962–976 (PSTSYSPQADSLRTP). Residue S967 is modified to Phosphoserine. Residue S1070 is modified to Phosphoserine. Disordered stretches follow at residues 1091–1212 (SYYD…KAGH), 1224–1261 (PLIPASQHKPEVLPSNTKPLPPPPTLTEEEEDPAMKPQ), and 1273–1589 (KRSA…EFDS). The segment covering 1108–1124 (QHPRDLDSRQHPEESSE) has biased composition (basic and acidic residues). S1138 is subject to Phosphoserine. Phosphotyrosine is present on residues Y1139 and Y1164. The tract at residues 1150-1370 (RTSTLRHEEQ…FDRRSFENKP (221 aa)) is actin-binding region (ABR). Basic and acidic residues predominate over residues 1273-1286 (KRSASLENKKDENH). The span at 1300–1310 (PGAPIIGPKPT) shows a compositional bias: pro residues. Positions 1335-1346 (PPEDIVRSNHYD) are enriched in basic and acidic residues. A Phosphotyrosine modification is found at Y1353. Phosphoserine is present on S1365. Positions 1387–1401 (HSQNQTNFSSYSSKG) are enriched in polar residues. Residues 1402-1419 (KSPEADAPDRSFGEKRYE) are compositionally biased toward basic and acidic residues. At S1412 the chain carries Phosphoserine. Composition is skewed to polar residues over residues 1460–1471 (NSISLDFQNSLV) and 1514–1523 (AEQTQKTVTP). The span at 1539 to 1548 (PFERKFESPK) shows a compositional bias: basic and acidic residues. A phosphoserine mark is found at S1546 and S1618. Residues 1635-1769 (ATARGVFNNN…NCVSVLIDHF (135 aa)) enclose the ZU5 domain.

This sequence belongs to the MAGUK family. Homodimer. Forms heterodimers TJP3. Forms a heterodimer (via PDZ2 domain) with TJP2/ZO2 (via PDZ2 domain). Interacts with OCLN. Interacts with CALM, claudins, CGN/cingulin, CXADR, GJA12, GJD3 and UBN1. Interacts (via ZU5 domain) with CDC42BPB and MYZAP. Interacts (via PDZ domain) with GJA1. Interacts (via PDZ domains) with ANKRD2. Interacts with POPDC1 (via the C-terminus cytoplasmic tail). Interacts with HSPA4. Interacts with KIRREL1. Interacts with DLL1. Interacts with USP53 (via the C-terminal region). Interacts with DNMBP (via C-terminal domain); required for the apical cell-cell junction localization of DNMBP. Interacts with SPEF1. Interacts (via N-terminus) with CTNNA1. Interacts with CLDN18. Interacts with CLDN16 (via TRV motif); this is a prerequisite for anchoring of CLDN16 at the tight junction. Interacts with PKP1; the interaction facilitates TJP1/ZO-1 localization to the plasma membrane. Interacts with PATJ (via PDZ1-6 domains); the interaction is required for attachment and extension of TJP1/ZO1 condensates along the apical cell interface. In terms of processing, phosphorylated at tyrosine redidues in response to epidermal growth factor (EGF). This response is dependent on an intact actin microfilament system. Dephosphorylated by PTPRJ.

It localises to the cell membrane. The protein resides in the cell junction. Its subcellular location is the tight junction. The protein localises to the gap junction. Functionally, TJP1, TJP2, and TJP3 are closely related scaffolding proteins that link tight junction (TJ) transmembrane proteins such as claudins, junctional adhesion molecules, and occludin to the actin cytoskeleton. Forms a multistranded TJP1/ZO1 condensate which elongates to form a tight junction belt, the belt is anchored at the apical cell membrane via interaction with PATJ. The tight junction acts to limit movement of substances through the paracellular space and as a boundary between the compositionally distinct apical and basolateral plasma membrane domains of epithelial and endothelial cells. Necessary for lumenogenesis, and particularly efficient epithelial polarization and barrier formation. Plays a role in the regulation of cell migration by targeting CDC42BPBb to the leading edge of migrating cells. With TJP2 and TJP3, participates in the junctional retention and stability of the transcription factor DBPA, but is not involved in its shuttling to the nucleus. May play a role in mediating cell morphology changes during ameloblast differentiation via its role in tight junctions. The polypeptide is Tight junction protein 1 (Canis lupus familiaris (Dog)).